An 802-amino-acid chain; its full sequence is Osmosensitive cation channel TMEM63C (802 aa).

Residues 1 to 35 (MTASPESMGQKFRNMTANECFQSRSTVLQGQPFGG) are Extracellular-facing. The helical transmembrane segment at 36–60 (IPTVLLLNIILWVCVVLVYSFLRKA) threads the bilayer. Residues 61–124 (AWDYGRLALL…RDRDLINKCG (64 aa)) lie on the Cytoplasmic side of the membrane. S75 and S78 each carry phosphoserine. The helical transmembrane segment at 125 to 157 (EDARIYIMFQYHLIIFVLILCIPSLGIILPVNY) threads the bilayer. Topologically, residues 158 to 180 (IGSALDWSSHFGRTTIVNVSTES) are extracellular. Residues 181–205 (QFLWLHSIFAFMYFLTNFAFMGHHC) traverse the membrane as a helical segment. Residues 206 to 401 (LGFVPKKNLH…IIWKHLSIRR (196 aa)) lie on the Cytoplasmic side of the membrane. The chain crosses the membrane as a helical span at residues 402-431 (FSWWARFIAINTSLFFLFFFLTTPAIIINT). The Extracellular portion of the chain corresponds to 432–446 (IDMYNVTRPIEKLQS). The helical transmembrane segment at 447 to 476 (PVVTQFFPSVLLWAFTVIMPLLVYFSAFLE) threads the bilayer. The Cytoplasmic segment spans residues 477 to 480 (AHWT). The helical transmembrane segment at 481–517 (RSNQNLIIMYKCYIFLVFMVVILPSMGLTSLDVFLRW) threads the bilayer. Residues 518-540 (LFDIYYLEHATIRFQCVFLPDNG) lie on the Extracellular side of the membrane. A helical transmembrane segment spans residues 541–573 (AFFINYVITSALFGTGMELMRLGSLCTYCTRLF). Topologically, residues 574 to 593 (LSRSEPERVHIRKNLAMDFQ) are cytoplasmic. The helical transmembrane segment at 594-612 (FGREYAWMLNVFSVVMAYS) threads the bilayer. Residues 613–615 (ITC) lie on the Extracellular side of the membrane. A helical membrane pass occupies residues 616-640 (PIIVPFGLLYLCMKHITDRYNMYYS). Over 641-647 (YAPTKLN) the chain is Cytoplasmic. Residues 648 to 676 (AQIHMAAVYQAIFAPLLGLFWMLFFSILR) form a helical membrane-spanning segment. The Extracellular portion of the chain corresponds to 677 to 681 (VGSLH). Residues 682 to 702 (SITLFSLSSIIISVIIAFSGV) traverse the membrane as a helical segment. Topologically, residues 703–802 (FLGKFRIAQQ…EGLELEGQSH (100 aa)) are cytoplasmic. Positions 753–785 (TPASSPARHTYGTMNSQPEEGEEESGLRGFARE) are disordered.

The protein belongs to the CSC1 (TC 1.A.17) family. Monomer. In terms of tissue distribution, expressed in podocytes of kidney glomeruli.

It is found in the endoplasmic reticulum membrane. The protein localises to the cell membrane. The catalysed reaction is Ca(2+)(in) = Ca(2+)(out). Acts as an osmosensitive cation channel preferentially activated upon hypotonic stress. In contrast to TMEM63B, does not show phospholipid scramblase activity. Enriched in mitochondria-ER contact sites where it may regulate the metabolite flux and organelles' morphologies in response to osmotic changes. In particular may regulate mitochondrial motility and function in motor neuron axons. Required for the functional integrity of the kidney glomerular filtration barrier. This is Osmosensitive cation channel TMEM63C (Tmem63c) from Rattus norvegicus (Rat).